A 293-amino-acid polypeptide reads, in one-letter code: Large ribosomal subunit protein uL18 (293 aa).

The tract at residues 249-273 (DASPAAKKAAKPSKRHTAKRLTYDE) is disordered. The span at 256–267 (KAAKPSKRHTAK) shows a compositional bias: basic residues.

It belongs to the universal ribosomal protein uL18 family. In terms of assembly, component of the large ribosomal subunit (LSU).

The protein localises to the cytoplasm. The protein resides in the nucleus. Functionally, component of the ribosome, a large ribonucleoprotein complex responsible for the synthesis of proteins in the cell. The small ribosomal subunit (SSU) binds messenger RNAs (mRNAs) and translates the encoded message by selecting cognate aminoacyl-transfer RNA (tRNA) molecules. The large subunit (LSU) contains the ribosomal catalytic site termed the peptidyl transferase center (PTC), which catalyzes the formation of peptide bonds, thereby polymerizing the amino acids delivered by tRNAs into a polypeptide chain. The nascent polypeptides leave the ribosome through a tunnel in the LSU and interact with protein factors that function in enzymatic processing, targeting, and the membrane insertion of nascent chains at the exit of the ribosomal tunnel. The protein is Large ribosomal subunit protein uL18 (rpl-5) of Caenorhabditis elegans.